Here is a 410-residue protein sequence, read N- to C-terminus: ATP phosphoribosyltransferase regulatory subunit (410 aa).

It belongs to the class-II aminoacyl-tRNA synthetase family. HisZ subfamily. As to quaternary structure, heteromultimer composed of HisG and HisZ subunits.

It is found in the cytoplasm. It functions in the pathway amino-acid biosynthesis; L-histidine biosynthesis; L-histidine from 5-phospho-alpha-D-ribose 1-diphosphate: step 1/9. Its function is as follows. Required for the first step of histidine biosynthesis. May allow the feedback regulation of ATP phosphoribosyltransferase activity by histidine. The chain is ATP phosphoribosyltransferase regulatory subunit from Synechococcus sp. (strain JA-3-3Ab) (Cyanobacteria bacterium Yellowstone A-Prime).